The sequence spans 226 residues: Holliday junction branch migration complex subunit RuvA (226 aa).

The segment at 1–67 (MITSVYAKIE…AINKELYAFK (67 aa)) is domain I. Residues 68 to 145 (SLKEKEWFKA…YLKNQIVVSD (78 aa)) form a domain II region. Positions 146–167 (KVEPQIDDDEKIDDSKDLNDDE) are flexible linker. The segment at 168 to 226 (LLSEIVIEAIDCLISLGYKQEQIKTALAEIDLKNESINDSADLVAVIIKQIGLRTSEVS) is domain III.

Belongs to the RuvA family. As to quaternary structure, homotetramer. Forms an RuvA(8)-RuvB(12)-Holliday junction (HJ) complex. HJ DNA is sandwiched between 2 RuvA tetramers; dsDNA enters through RuvA and exits via RuvB. An RuvB hexamer assembles on each DNA strand where it exits the tetramer. Each RuvB hexamer is contacted by two RuvA subunits (via domain III) on 2 adjacent RuvB subunits; this complex drives branch migration. In the full resolvosome a probable DNA-RuvA(4)-RuvB(12)-RuvC(2) complex forms which resolves the HJ.

The protein localises to the cytoplasm. In terms of biological role, the RuvA-RuvB-RuvC complex processes Holliday junction (HJ) DNA during genetic recombination and DNA repair, while the RuvA-RuvB complex plays an important role in the rescue of blocked DNA replication forks via replication fork reversal (RFR). RuvA specifically binds to HJ cruciform DNA, conferring on it an open structure. The RuvB hexamer acts as an ATP-dependent pump, pulling dsDNA into and through the RuvAB complex. HJ branch migration allows RuvC to scan DNA until it finds its consensus sequence, where it cleaves and resolves the cruciform DNA. In Mycoplasmoides gallisepticum (strain R(low / passage 15 / clone 2)) (Mycoplasma gallisepticum), this protein is Holliday junction branch migration complex subunit RuvA.